Here is a 169-residue protein sequence, read N- to C-terminus: Peptide deformylase (169 aa).

Residues cysteine 91 and histidine 133 each contribute to the Fe cation site. Residue glutamate 134 is part of the active site. Histidine 137 contributes to the Fe cation binding site.

Belongs to the polypeptide deformylase family. Fe(2+) is required as a cofactor.

It carries out the reaction N-terminal N-formyl-L-methionyl-[peptide] + H2O = N-terminal L-methionyl-[peptide] + formate. Removes the formyl group from the N-terminal Met of newly synthesized proteins. Requires at least a dipeptide for an efficient rate of reaction. N-terminal L-methionine is a prerequisite for activity but the enzyme has broad specificity at other positions. The sequence is that of Peptide deformylase from Escherichia coli (strain K12 / DH10B).